A 108-amino-acid polypeptide reads, in one-letter code: Glutaredoxin (108 aa).

The Glutaredoxin domain maps to 3–103 (LAKAKEIVSG…PLLTEAGAIA (101 aa)). Cys23 and Cys26 are disulfide-bonded.

It belongs to the glutaredoxin family. CPYC subfamily.

Its subcellular location is the cytoplasm. In terms of biological role, has a glutathione-disulfide oxidoreductase activity in the presence of NADPH and glutathione reductase. Reduces low molecular weight disulfides and proteins. The chain is Glutaredoxin from Solanum lycopersicum (Tomato).